The following is a 229-amino-acid chain: Large ribosomal subunit protein uL1 (229 aa).

Belongs to the universal ribosomal protein uL1 family. In terms of assembly, part of the 50S ribosomal subunit.

In terms of biological role, binds directly to 23S rRNA. The L1 stalk is quite mobile in the ribosome, and is involved in E site tRNA release. Its function is as follows. Protein L1 is also a translational repressor protein, it controls the translation of the L11 operon by binding to its mRNA. The polypeptide is Large ribosomal subunit protein uL1 (Streptococcus pneumoniae (strain Taiwan19F-14)).